The chain runs to 479 residues: ATP synthase subunit beta (479 aa).

162 to 169 (GGAGVGKT) serves as a coordination point for ATP.

The protein belongs to the ATPase alpha/beta chains family. As to quaternary structure, F-type ATPases have 2 components, CF(1) - the catalytic core - and CF(0) - the membrane proton channel. CF(1) has five subunits: alpha(3), beta(3), gamma(1), delta(1), epsilon(1). CF(0) has three main subunits: a(1), b(2) and c(9-12). The alpha and beta chains form an alternating ring which encloses part of the gamma chain. CF(1) is attached to CF(0) by a central stalk formed by the gamma and epsilon chains, while a peripheral stalk is formed by the delta and b chains.

The protein resides in the cell membrane. It carries out the reaction ATP + H2O + 4 H(+)(in) = ADP + phosphate + 5 H(+)(out). Functionally, produces ATP from ADP in the presence of a proton gradient across the membrane. The catalytic sites are hosted primarily by the beta subunits. The chain is ATP synthase subunit beta from Mesoplasma florum (strain ATCC 33453 / NBRC 100688 / NCTC 11704 / L1) (Acholeplasma florum).